The primary structure comprises 220 residues: Imidazoleglycerol-phosphate dehydratase (220 aa).

Belongs to the imidazoleglycerol-phosphate dehydratase family.

The catalysed reaction is D-erythro-1-(imidazol-4-yl)glycerol 3-phosphate = 3-(imidazol-4-yl)-2-oxopropyl phosphate + H2O. It functions in the pathway amino-acid biosynthesis; L-histidine biosynthesis; L-histidine from 5-phospho-alpha-D-ribose 1-diphosphate: step 6/9. The sequence is that of Imidazoleglycerol-phosphate dehydratase (HIS3) from Eremothecium gossypii (strain ATCC 10895 / CBS 109.51 / FGSC 9923 / NRRL Y-1056) (Yeast).